The primary structure comprises 100 residues: Urease subunit gamma (100 aa).

The protein belongs to the urease gamma subunit family. As to quaternary structure, heterotrimer of UreA (gamma), UreB (beta) and UreC (alpha) subunits. Three heterotrimers associate to form the active enzyme.

It localises to the cytoplasm. The enzyme catalyses urea + 2 H2O + H(+) = hydrogencarbonate + 2 NH4(+). It participates in nitrogen metabolism; urea degradation; CO(2) and NH(3) from urea (urease route): step 1/1. The chain is Urease subunit gamma from Nostoc punctiforme (strain ATCC 29133 / PCC 73102).